We begin with the raw amino-acid sequence, 218 residues long: 1-Cys peroxiredoxin PER1 (218 aa).

The Thioredoxin domain maps to 4 to 164 (LTIGDTVPNL…VVRAVDSLLT (161 aa)). Cys-46 functions as the Cysteine sulfenic acid (-SOH) intermediate in the catalytic mechanism. The Bipartite nuclear localization signal signature appears at 194 to 217 (KKMFPQGFETADLPSKKGYLRFTK).

Belongs to the peroxiredoxin family. Prx6 subfamily. Embryo and aleurone cells.

The protein resides in the nucleus. Its subcellular location is the cytoplasm. It catalyses the reaction a hydroperoxide + [thioredoxin]-dithiol = an alcohol + [thioredoxin]-disulfide + H2O. Functionally, thiol-specific peroxidase that catalyzes the reduction of hydrogen peroxide and organic hydroperoxides to water and alcohols, respectively. Seems to contribute to the inhibition of germination during stress. This is 1-Cys peroxiredoxin PER1 (PER1) from Hordeum vulgare (Barley).